A 397-amino-acid polypeptide reads, in one-letter code: MAKLDFDRSKPHVNIGTIGHVDHGKTTLTAAIATVLAKKGLAEARDYASIDNAPEEKARGITINTSHIEYQTEKRHYAHVDCPGHADYVKNMITGAAQMDGAILVVAATDGPMPQTREHILLARQVGVPKIVVFLNKIDMFKDDEREEMVGLVEMDVRSLLSEYGFDGDNAPIIAGSALKALQGDPEYEKGILELMDAVDTYIEEPKRETDKPFLMAVEDVFTITGRGTVATGRVERGVLQLNEEVEIVGLKPTKKTVVTGIEMFRKNLKEAQAGDNAGLLLRGIDRSEVERGQVLAKPKTIVPHTQFEATVYVLKKEEGGRHTPFFHNYKPQFYFRTTDVTGGIEFKPGREMVVPGDNVELTVTLIAPIAIEEGTKFSIREGGRTVGAGSVTKILK.

The tr-type G domain occupies lysine 10–lysine 207. Residues glycine 19–threonine 26 are G1. Glycine 19–threonine 26 lines the GTP pocket. Residue threonine 26 participates in Mg(2+) binding. Residues glycine 60 to asparagine 64 are G2. The G3 stretch occupies residues aspartate 81–glycine 84. Residues aspartate 81 to histidine 85 and asparagine 136 to aspartate 139 each bind GTP. Positions asparagine 136–aspartate 139 are G4. Positions serine 177–leucine 179 are G5.

This sequence belongs to the TRAFAC class translation factor GTPase superfamily. Classic translation factor GTPase family. EF-Tu/EF-1A subfamily. Monomer.

It is found in the cytoplasm. The enzyme catalyses GTP + H2O = GDP + phosphate + H(+). GTP hydrolase that promotes the GTP-dependent binding of aminoacyl-tRNA to the A-site of ribosomes during protein biosynthesis. The polypeptide is Elongation factor Tu (Metamycoplasma hominis (strain ATCC 23114 / DSM 25592 / NBRC 14850 / NCTC 10111 / PG21) (Mycoplasma hominis)).